The primary structure comprises 172 residues: 3-hydroxydecanoyl-[acyl-carrier-protein] dehydratase (172 aa).

His-71 is an active-site residue.

This sequence belongs to the thioester dehydratase family. FabA subfamily. Homodimer.

The protein resides in the cytoplasm. It carries out the reaction a (3R)-hydroxyacyl-[ACP] = a (2E)-enoyl-[ACP] + H2O. It catalyses the reaction (3R)-hydroxydecanoyl-[ACP] = (2E)-decenoyl-[ACP] + H2O. The catalysed reaction is (2E)-decenoyl-[ACP] = (3Z)-decenoyl-[ACP]. It participates in lipid metabolism; fatty acid biosynthesis. Necessary for the introduction of cis unsaturation into fatty acids. Catalyzes the dehydration of (3R)-3-hydroxydecanoyl-ACP to E-(2)-decenoyl-ACP and then its isomerization to Z-(3)-decenoyl-ACP. Can catalyze the dehydratase reaction for beta-hydroxyacyl-ACPs with saturated chain lengths up to 16:0, being most active on intermediate chain length. The chain is 3-hydroxydecanoyl-[acyl-carrier-protein] dehydratase from Photorhabdus laumondii subsp. laumondii (strain DSM 15139 / CIP 105565 / TT01) (Photorhabdus luminescens subsp. laumondii).